The sequence spans 208 residues: Large ribosomal subunit protein uL3 (208 aa).

N5-methylglutamine is present on Q149.

Belongs to the universal ribosomal protein uL3 family. As to quaternary structure, part of the 50S ribosomal subunit. Forms a cluster with proteins L14 and L19. In terms of processing, methylated by PrmB.

One of the primary rRNA binding proteins, it binds directly near the 3'-end of the 23S rRNA, where it nucleates assembly of the 50S subunit. This chain is Large ribosomal subunit protein uL3, found in Haemophilus ducreyi (strain 35000HP / ATCC 700724).